Here is a 152-residue protein sequence, read N- to C-terminus: Ribosome maturation factor RimP (152 aa).

This sequence belongs to the RimP family.

The protein localises to the cytoplasm. Required for maturation of 30S ribosomal subunits. The protein is Ribosome maturation factor RimP of Pectobacterium atrosepticum (strain SCRI 1043 / ATCC BAA-672) (Erwinia carotovora subsp. atroseptica).